The chain runs to 401 residues: Dual-specificity RNA methyltransferase RlmN (401 aa).

E114 acts as the Proton acceptor in catalysis. In terms of domain architecture, Radical SAM core spans D120–D365. C127 and C370 are oxidised to a cystine. [4Fe-4S] cluster contacts are provided by C134, C138, and C141. S-adenosyl-L-methionine is bound by residues G187–E188, S219, S241–H243, and N327. Catalysis depends on C370, which acts as the S-methylcysteine intermediate.

This sequence belongs to the radical SAM superfamily. RlmN family. It depends on [4Fe-4S] cluster as a cofactor.

The protein resides in the cytoplasm. It carries out the reaction adenosine(2503) in 23S rRNA + 2 reduced [2Fe-2S]-[ferredoxin] + 2 S-adenosyl-L-methionine = 2-methyladenosine(2503) in 23S rRNA + 5'-deoxyadenosine + L-methionine + 2 oxidized [2Fe-2S]-[ferredoxin] + S-adenosyl-L-homocysteine. It catalyses the reaction adenosine(37) in tRNA + 2 reduced [2Fe-2S]-[ferredoxin] + 2 S-adenosyl-L-methionine = 2-methyladenosine(37) in tRNA + 5'-deoxyadenosine + L-methionine + 2 oxidized [2Fe-2S]-[ferredoxin] + S-adenosyl-L-homocysteine. Its function is as follows. Specifically methylates position 2 of adenine 2503 in 23S rRNA and position 2 of adenine 37 in tRNAs. m2A2503 modification seems to play a crucial role in the proofreading step occurring at the peptidyl transferase center and thus would serve to optimize ribosomal fidelity. The chain is Dual-specificity RNA methyltransferase RlmN from Xanthomonas campestris pv. campestris (strain B100).